Here is a 318-residue protein sequence, read N- to C-terminus: Aspartate carbamoyltransferase catalytic subunit (318 aa).

Residues R58 and T59 each coordinate carbamoyl phosphate. K86 is an L-aspartate binding site. Carbamoyl phosphate-binding residues include R108, H141, and Q144. Residues R174 and R226 each contribute to the L-aspartate site. Carbamoyl phosphate contacts are provided by G270 and P271.

This sequence belongs to the aspartate/ornithine carbamoyltransferase superfamily. ATCase family. Heterododecamer (2C3:3R2) of six catalytic PyrB chains organized as two trimers (C3), and six regulatory PyrI chains organized as three dimers (R2).

The enzyme catalyses carbamoyl phosphate + L-aspartate = N-carbamoyl-L-aspartate + phosphate + H(+). Its pathway is pyrimidine metabolism; UMP biosynthesis via de novo pathway; (S)-dihydroorotate from bicarbonate: step 2/3. In terms of biological role, catalyzes the condensation of carbamoyl phosphate and aspartate to form carbamoyl aspartate and inorganic phosphate, the committed step in the de novo pyrimidine nucleotide biosynthesis pathway. This chain is Aspartate carbamoyltransferase catalytic subunit, found in Lactobacillus acidophilus (strain ATCC 700396 / NCK56 / N2 / NCFM).